The primary structure comprises 363 residues: Serine/threonine-protein kinase SRK2A (363 aa).

The Protein kinase domain occupies 4–260 (YELVKDIGAG…IAEIKKHSWF (257 aa)). Residues 10–18 (IGAGNFGVA) and Lys-33 each bind ATP. Asp-123 (proton acceptor) is an active-site residue. The tract at residues 306–363 (SRSIGGFGWGGNGDADGKEEDAEDVEEEEEEVEEEEDDEDEYDKTVKEVHASGEVRIS) is disordered. Gly residues predominate over residues 310–319 (GGFGWGGNGD). Residues 322–347 (GKEEDAEDVEEEEEEVEEEEDDEDEY) are compositionally biased toward acidic residues. Residues 348–363 (DKTVKEVHASGEVRIS) are compositionally biased toward basic and acidic residues.

It belongs to the protein kinase superfamily. Ser/Thr protein kinase family. As to quaternary structure, interacts with TOPP1. In terms of tissue distribution, expressed in seedlings.

The catalysed reaction is L-seryl-[protein] + ATP = O-phospho-L-seryl-[protein] + ADP + H(+). It carries out the reaction L-threonyl-[protein] + ATP = O-phospho-L-threonyl-[protein] + ADP + H(+). The chain is Serine/threonine-protein kinase SRK2A (SRK2A) from Arabidopsis thaliana (Mouse-ear cress).